The sequence spans 250 residues: Bis(5'-nucleosyl)-tetraphosphatase PrpE [asymmetrical] (250 aa).

The protein belongs to the PrpE family. The cofactor is Ni(2+).

It carries out the reaction P(1),P(4)-bis(5'-guanosyl) tetraphosphate + H2O = GMP + GTP + 2 H(+). In terms of biological role, asymmetrically hydrolyzes Ap4p to yield AMP and ATP. This Oceanobacillus iheyensis (strain DSM 14371 / CIP 107618 / JCM 11309 / KCTC 3954 / HTE831) protein is Bis(5'-nucleosyl)-tetraphosphatase PrpE [asymmetrical].